The chain runs to 86 residues: DNA-directed RNA polymerase subunit omega (86 aa).

Residues 67-76 show a composition bias toward basic and acidic residues; it reads SAREHAKESQ. A disordered region spans residues 67–86; that stretch reads SAREHAKESQVSEEEVREES. A compositionally biased stretch (acidic residues) spans 77–86; sequence VSEEEVREES.

It belongs to the RNA polymerase subunit omega family. In terms of assembly, the RNAP catalytic core consists of 2 alpha, 1 beta, 1 beta' and 1 omega subunit. When a sigma factor is associated with the core the holoenzyme is formed, which can initiate transcription.

The enzyme catalyses RNA(n) + a ribonucleoside 5'-triphosphate = RNA(n+1) + diphosphate. Promotes RNA polymerase assembly. Latches the N- and C-terminal regions of the beta' subunit thereby facilitating its interaction with the beta and alpha subunits. This chain is DNA-directed RNA polymerase subunit omega, found in Nitrosococcus oceani (strain ATCC 19707 / BCRC 17464 / JCM 30415 / NCIMB 11848 / C-107).